The chain runs to 211 residues: Pyridoxine/pyridoxamine 5'-phosphate oxidase (211 aa).

Substrate contacts are provided by residues 7–10 (RRDY) and K65. FMN contacts are provided by residues 60 to 65 (RIVLLK), 75 to 76 (YT), R81, K82, and Q104. The substrate site is built by Y122, R126, and S130. FMN-binding positions include 139 to 140 (QS) and W184. Residue 190-192 (RLH) participates in substrate binding. An FMN-binding site is contributed by R194.

Belongs to the pyridoxamine 5'-phosphate oxidase family. Homodimer. FMN is required as a cofactor.

It catalyses the reaction pyridoxamine 5'-phosphate + O2 + H2O = pyridoxal 5'-phosphate + H2O2 + NH4(+). The catalysed reaction is pyridoxine 5'-phosphate + O2 = pyridoxal 5'-phosphate + H2O2. It functions in the pathway cofactor metabolism; pyridoxal 5'-phosphate salvage; pyridoxal 5'-phosphate from pyridoxamine 5'-phosphate: step 1/1. Its pathway is cofactor metabolism; pyridoxal 5'-phosphate salvage; pyridoxal 5'-phosphate from pyridoxine 5'-phosphate: step 1/1. In terms of biological role, catalyzes the oxidation of either pyridoxine 5'-phosphate (PNP) or pyridoxamine 5'-phosphate (PMP) into pyridoxal 5'-phosphate (PLP). The sequence is that of Pyridoxine/pyridoxamine 5'-phosphate oxidase from Aliivibrio fischeri (strain ATCC 700601 / ES114) (Vibrio fischeri).